The primary structure comprises 233 residues: Type IV secretion system protein PtlE homolog (233 aa).

Residues 42-62 (VAWAALAVTALSLIAIATMLP) traverse the membrane as a helical segment.

The protein belongs to the virB8 family.

Its subcellular location is the cell inner membrane. The chain is Type IV secretion system protein PtlE homolog (ptlE) from Bordetella bronchiseptica (strain ATCC BAA-588 / NCTC 13252 / RB50) (Alcaligenes bronchisepticus).